The following is a 467-amino-acid chain: Transcription factor bHLH3 (467 aa).

The bHLH domain occupies 316 to 365; the sequence is EEALNHVEAERQRREKLNQRFYALRAVVPNISKMDKASLLADAITYITDM.

In terms of assembly, homodimer.

The protein localises to the nucleus. The protein is Transcription factor bHLH3 (BHLH3) of Arabidopsis thaliana (Mouse-ear cress).